The sequence spans 186 residues: MMNQYNVTYLSKILCLKTEILYKPFSIINRSIVNQYNIDVKYDDITSIVKIRHKTENTILVFQIFNESNVKYSPIEYDYGDPIIITSNLQHGHNRIPINMLYIDVVESDMFPTFSRLDSETIKIITSILQSDNKKEQSIKLPKVSENELSVKILYHKDYPLKYVRYYKNNMVTGIEVIDRSVAITS.

The protein belongs to the poxviridae DNA-directed RNA polymerase 22 kDa subunit family. The DNA-dependent RNA polymerase used for intermediate and late genes expression consists of eight subunits Rpo30/OPG66, Rpo7/OPG90, Rpo22/OPG103, Rpo147/OPG105, Rpo18/OPG119, Rpo19/OPG131, Rpo132/OPG151 and Rpo35/OPG156. The same holoenzyme, with the addition of the transcription-specificity factor OPG109, is used for early gene expression.

The protein resides in the virion. The catalysed reaction is RNA(n) + a ribonucleoside 5'-triphosphate = RNA(n+1) + diphosphate. Its function is as follows. Part of the DNA-dependent RNA polymerase which catalyzes the transcription of viral DNA into RNA using the four ribonucleoside triphosphates as substrates. Responsible for the transcription of early, intermediate and late genes. DNA-dependent RNA polymerase associates with the early transcription factor (ETF), itself composed of OPG118 and OPG133, thereby allowing the early genes transcription. Late transcription, and probably also intermediate transcription, require newly synthesized RNA polymerase. This chain is DNA-directed RNA polymerase 22 kDa subunit (OPG103), found in Vertebrata (FPV).